Here is a 282-residue protein sequence, read N- to C-terminus: Pantothenate synthetase (282 aa).

30-37 (MGYLHEGH) serves as a coordination point for ATP. Catalysis depends on His37, which acts as the Proton donor. Gln61 provides a ligand contact to (R)-pantoate. Gln61 is a binding site for beta-alanine. 147–150 (GMKD) provides a ligand contact to ATP. Gln153 provides a ligand contact to (R)-pantoate. ATP contacts are provided by residues Val176 and 184-187 (KSSR).

The protein belongs to the pantothenate synthetase family. In terms of assembly, homodimer.

It localises to the cytoplasm. The catalysed reaction is (R)-pantoate + beta-alanine + ATP = (R)-pantothenate + AMP + diphosphate + H(+). Its pathway is cofactor biosynthesis; (R)-pantothenate biosynthesis; (R)-pantothenate from (R)-pantoate and beta-alanine: step 1/1. In terms of biological role, catalyzes the condensation of pantoate with beta-alanine in an ATP-dependent reaction via a pantoyl-adenylate intermediate. This is Pantothenate synthetase from Bacillus cereus (strain ZK / E33L).